We begin with the raw amino-acid sequence, 465 residues long: 3-isopropylmalate dehydratase large subunit (465 aa).

Cys-347, Cys-407, and Cys-410 together coordinate [4Fe-4S] cluster.

The protein belongs to the aconitase/IPM isomerase family. LeuC type 1 subfamily. In terms of assembly, heterodimer of LeuC and LeuD. [4Fe-4S] cluster is required as a cofactor.

The catalysed reaction is (2R,3S)-3-isopropylmalate = (2S)-2-isopropylmalate. Its pathway is amino-acid biosynthesis; L-leucine biosynthesis; L-leucine from 3-methyl-2-oxobutanoate: step 2/4. Its function is as follows. Catalyzes the isomerization between 2-isopropylmalate and 3-isopropylmalate, via the formation of 2-isopropylmaleate. The protein is 3-isopropylmalate dehydratase large subunit of Buchnera aphidicola subsp. Pemphigus spyrothecae.